Consider the following 240-residue polypeptide: Heme oxygenase 1 (240 aa).

5 residues coordinate heme b: Arg10, His17, Tyr125, Lys168, and Arg172.

It belongs to the heme oxygenase family.

The enzyme catalyses heme b + 3 reduced [NADPH--hemoprotein reductase] + 3 O2 = biliverdin IXalpha + CO + Fe(2+) + 3 oxidized [NADPH--hemoprotein reductase] + 3 H2O + H(+). Functionally, catalyzes the opening of the heme ring with the release of iron. Key enzyme in the synthesis of the chromophoric part of the photosynthetic antennae. This Synechocystis sp. (strain ATCC 27184 / PCC 6803 / Kazusa) protein is Heme oxygenase 1 (pbsA1).